The sequence spans 377 residues: MRRLNRRKTLSLVKELDAFPKVPDSYVETSASGGTVSLIAFTTMALLTIMEFSVYQDTWMKYEYEVDKDFSSKLRINIDITVAMKCHYVGADVLDLAETMVASADGLAYEPALFDLSPQQREWQRMLQLIQSRLQEEHSLQDVIFKSAFKSASTALPPREDDSSLTPDACRIHGHLYVNKVAGNFHITVGKAIPHPRGHAHLAALVNHDSYNFSHRIDHLSFGELVPGIINPLDGTEKIAVDHNQMFQYFITVVPTKLHTYKISADTHQFSVTERERIINHAAGSHGVSGIFMKYDLSSLMVTVTEEHMPFWQFFVRLCGIIGGIFSTTGMLHGIGKFIVEIICCRFRLGSYKPVRSVPFADGHTDNHLPLLENNTH.

Residues 1-33 (MRRLNRRKTLSLVKELDAFPKVPDSYVETSASG) are Cytoplasmic-facing. A helical transmembrane segment spans residues 34 to 54 (GTVSLIAFTTMALLTIMEFSV). Residues 55–319 (YQDTWMKYEY…PFWQFFVRLC (265 aa)) are Lumenal-facing. A helical transmembrane segment spans residues 320–340 (GIIGGIFSTTGMLHGIGKFIV). At 341 to 377 (EIICCRFRLGSYKPVRSVPFADGHTDNHLPLLENNTH) the chain is on the cytoplasmic side.

This sequence belongs to the ERGIC family. As to quaternary structure, may form a heteromeric complex composed of ERGIC1, ERGIC2 and ERGIC3. Interacts with ERGIC3, the interaction is required for the stable expression of both proteins. May interact with EEF1A1.

It localises to the endoplasmic reticulum-Golgi intermediate compartment membrane. The protein localises to the golgi apparatus. Its subcellular location is the cis-Golgi network membrane. The protein resides in the endoplasmic reticulum membrane. It is found in the cytoplasm. It localises to the nucleus. Its function is as follows. Possible role in transport between endoplasmic reticulum and Golgi. This is Endoplasmic reticulum-Golgi intermediate compartment protein 2 (Ergic2) from Mus musculus (Mouse).